The primary structure comprises 547 residues: Signal recognition particle receptor subunit alpha homolog (547 aa).

A disordered region spans residues 124–174; the sequence is LENETDTKSLPVEANNDNSARKKNEYEMKKKGAQSKQTNAPKKGKKQLRKW. The segment covering 142–153 has biased composition (basic and acidic residues); the sequence is SARKKNEYEMKK. Positions 343 to 546 are NG domain; that stretch reads YTISLIGVNG…SVDWVVDQLM (204 aa). GTP is bound by residues 349–356, 437–441, and 498–501; these read GVNGVGKS, DTAGR, and SKVD.

Belongs to the GTP-binding SRP family. Heterodimer of an alpha and a beta chain.

Its subcellular location is the endoplasmic reticulum membrane. Functionally, component of the SRP (signal recognition particle) receptor (SR). Ensures, in conjunction with the signal recognition particle, the correct targeting of the nascent secretory proteins to the endoplasmic reticulum membrane system. GTP hydrolysis may enhance the fidelity of and provide unidirectionality to the targeting reaction. This chain is Signal recognition particle receptor subunit alpha homolog (srp101), found in Schizosaccharomyces pombe (strain 972 / ATCC 24843) (Fission yeast).